The primary structure comprises 187 residues: Holliday junction branch migration complex subunit RuvA (187 aa).

Residues 1-64 are domain I; it reads MIEYVRGIIE…EDGFQIFGFK (64 aa). The domain II stretch occupies residues 65-136; it reads TKEELDLFEK…ELKDKLPKEI (72 aa). The segment at 136–139 is flexible linker; sequence IVFE. The segment at 140–187 is domain III; that stretch reads GDNNFSNEALEALLALGYTKSEAIYALADITCDSVEDAVKQALKKLMK.

It belongs to the RuvA family. Homotetramer. Forms an RuvA(8)-RuvB(12)-Holliday junction (HJ) complex. HJ DNA is sandwiched between 2 RuvA tetramers; dsDNA enters through RuvA and exits via RuvB. An RuvB hexamer assembles on each DNA strand where it exits the tetramer. Each RuvB hexamer is contacted by two RuvA subunits (via domain III) on 2 adjacent RuvB subunits; this complex drives branch migration. In the full resolvosome a probable DNA-RuvA(4)-RuvB(12)-RuvC(2) complex forms which resolves the HJ.

The protein resides in the cytoplasm. Its function is as follows. The RuvA-RuvB-RuvC complex processes Holliday junction (HJ) DNA during genetic recombination and DNA repair, while the RuvA-RuvB complex plays an important role in the rescue of blocked DNA replication forks via replication fork reversal (RFR). RuvA specifically binds to HJ cruciform DNA, conferring on it an open structure. The RuvB hexamer acts as an ATP-dependent pump, pulling dsDNA into and through the RuvAB complex. HJ branch migration allows RuvC to scan DNA until it finds its consensus sequence, where it cleaves and resolves the cruciform DNA. The sequence is that of Holliday junction branch migration complex subunit RuvA from Thermoanaerobacter pseudethanolicus (strain ATCC 33223 / 39E) (Clostridium thermohydrosulfuricum).